A 302-amino-acid chain; its full sequence is Bifunctional protein FolD (302 aa).

Residues 165-167 (GRS), S190, and I231 each bind NADP(+).

Belongs to the tetrahydrofolate dehydrogenase/cyclohydrolase family. In terms of assembly, homodimer.

It catalyses the reaction (6R)-5,10-methylene-5,6,7,8-tetrahydrofolate + NADP(+) = (6R)-5,10-methenyltetrahydrofolate + NADPH. It carries out the reaction (6R)-5,10-methenyltetrahydrofolate + H2O = (6R)-10-formyltetrahydrofolate + H(+). It functions in the pathway one-carbon metabolism; tetrahydrofolate interconversion. Catalyzes the oxidation of 5,10-methylenetetrahydrofolate to 5,10-methenyltetrahydrofolate and then the hydrolysis of 5,10-methenyltetrahydrofolate to 10-formyltetrahydrofolate. This is Bifunctional protein FolD from Prochlorococcus marinus (strain SARG / CCMP1375 / SS120).